Here is a 164-residue protein sequence, read N- to C-terminus: MNIFIMRHGEAEVMANSDKARHLTVYGSKQAFLQGQWLKQHLSTLVINSLDRILVSPYVRAQETFHQVNQAFDLELENKFEIWEGITPYGHAHSVIDYLEVLKDEGVKSVLIVSHLPLVGEIVAELYGKRNPISFYPATIAQLLWDGNKSEILMHQASPVIYLK.

This sequence belongs to the SixA phosphatase family.

The sequence is that of Phosphohistidine phosphatase SixA homolog (sixA-A) from Haemophilus influenzae (strain ATCC 51907 / DSM 11121 / KW20 / Rd).